Consider the following 388-residue polypeptide: MNIHEYQGKEILRKYNVPVPRGIPAFSVDEAIKAAETLGGPVWVVKAQIHAGGRGKGGGVKVAKSIEQVKEYASSILGMTLVTHQTGPEGKLVKRLLIEEGADIKKELYVSLVVDRVSQQVALMASSEGGMDIEEVAESHPEKIHTLLIDPQAGLQDAQADDIARKIGVPDASVPQARQALQGLYKAFWETDASQAEINPLILTGDGKVIALDAKFNFDSNALFRHPEIVAYRDLDEEDPAEIEASKFDLAYISLDGNIGCLVNGAGLAMATMDTIKLFGGEPANFLDVGGGATTEKVTEAFKLMLKNPDVKAILVNIFGGIMRCDVIAEGVIAAAKAVSLSVPLVVRMKGTNEDLGKKMLADSGLPIIAADTMAEAAEKVVAAAAGK.

An ATP-grasp domain is found at 9–244 (KEILRKYNVP…LDEEDPAEIE (236 aa)). Residues lysine 46, 53–55 (GRG), glutamate 99, alanine 102, and glutamate 107 contribute to the ATP site. The Mg(2+) site is built by asparagine 199 and aspartate 213. Substrate-binding positions include asparagine 264 and 321–323 (GIM).

Belongs to the succinate/malate CoA ligase beta subunit family. Heterotetramer of two alpha and two beta subunits. The cofactor is Mg(2+).

The enzyme catalyses succinate + ATP + CoA = succinyl-CoA + ADP + phosphate. It carries out the reaction GTP + succinate + CoA = succinyl-CoA + GDP + phosphate. Its pathway is carbohydrate metabolism; tricarboxylic acid cycle; succinate from succinyl-CoA (ligase route): step 1/1. Functionally, succinyl-CoA synthetase functions in the citric acid cycle (TCA), coupling the hydrolysis of succinyl-CoA to the synthesis of either ATP or GTP and thus represents the only step of substrate-level phosphorylation in the TCA. The beta subunit provides nucleotide specificity of the enzyme and binds the substrate succinate, while the binding sites for coenzyme A and phosphate are found in the alpha subunit. The chain is Succinate--CoA ligase [ADP-forming] subunit beta from Ralstonia pickettii (strain 12J).